Here is a 784-residue protein sequence, read N- to C-terminus: Toll-like receptor 2 (784 aa).

The first 20 residues, methionine 1–glycine 20, serve as a signal peptide directing secretion. Topologically, residues alanine 21–arginine 587 are extracellular. Cysteine 30 and cysteine 36 form a disulfide bridge. LRR repeat units lie at residues valine 54–asparagine 77, leucine 78–asparagine 101, leucine 102–alanine 125, leucine 126–asparagine 150, leucine 151–phenylalanine 175, leucine 176–asparagine 199, isoleucine 200–serine 223, leucine 224–serine 250, valine 251–glycine 278, isoleucine 279–asparagine 308, valine 309–lysine 337, valine 338–serine 361, leucine 362–phenylalanine 388, leucine 389–asparagine 414, leucine 415–lysine 437, methionine 438–glutamine 457, threonine 458–glutamine 478, leucine 479–valine 500, and leucine 501–glutamine 524. Residue asparagine 114 is glycosylated (N-linked (GlcNAc...) asparagine). The N-linked (GlcNAc...) asparagine glycan is linked to asparagine 199. Asparagine 248 carries an N-linked (GlcNAc...) asparagine glycan. A disulfide bridge connects residues cysteine 353 and cysteine 382. A disulfide bridge connects residues cysteine 432 and cysteine 454. Asparagine 442 is a glycosylation site (N-linked (GlcNAc...) asparagine). The region spanning leucine 525–arginine 579 is the LRRCT domain. Residues alanine 588–leucine 608 traverse the membrane as a helical segment. Topologically, residues cysteine 609–serine 784 are cytoplasmic. The TIR domain occupies leucine 639–isoleucine 782. A Glycyl lysine isopeptide (Lys-Gly) (interchain with G-Cter in ubiquitin) cross-link involves residue lysine 754. The short motif at tyrosine 761–leucine 778 is the ATG16L1-binding motif element.

This sequence belongs to the Toll-like receptor family. As to quaternary structure, interacts with LY96, TLR1 and TLR6 (via extracellular domain). TLR2 seems to exist in heterodimers with either TLR1 or TLR6 before stimulation by the ligand. The heterodimers form bigger oligomers in response to their corresponding ligands as well as further heterotypic associations with other receptors such as CD14 and/or CD36. Binds MYD88 (via TIR domain). Interacts with TICAM1. Interacts with CNPY3. Interacts with ATG16L1. Interacts with PPP1R11. Interacts with TICAM2. Interacts with TIRAP. In terms of processing, ubiquitinated at Lys-754 by PPP1R11, leading to its degradation. Deubiquitinated by USP2. Post-translationally, glycosylation of Asn-442 is critical for secretion of the N-terminal ectodomain of TLR2.

Its subcellular location is the membrane. It localises to the cytoplasmic vesicle. The protein resides in the phagosome membrane. The protein localises to the membrane raft. Its function is as follows. Cooperates with LY96 to mediate the innate immune response to bacterial lipoproteins and other microbial cell wall components. Cooperates with TLR1 or TLR6 to mediate the innate immune response to bacterial lipoproteins or lipopeptides. Acts via MYD88 and TRAF6, leading to NF-kappa-B activation, cytokine secretion and the inflammatory response. May also promote apoptosis in response to lipoproteins. Forms activation clusters composed of several receptors depending on the ligand, these clusters trigger signaling from the cell surface and subsequently are targeted to the Golgi in a lipid-raft dependent pathway. Forms the cluster TLR2:TLR6:CD14:CD36 in response to diacylated lipopeptides and TLR2:TLR1:CD14 in response to triacylated lipopeptides. This Capra hircus (Goat) protein is Toll-like receptor 2 (TLR2).